The sequence spans 232 residues: MLKLTDITWLYHHLPMRFSLTVERGEQVAILGPSGAGKSTLLNLIAGFLTPASGLLTIDDVDHTTTPPSRRPVSMLFQENNLFSHLTVAQNIGLGLNPGLKLNAAQQKKMHAIAHQMGIDNLMARLPGELSGGQRQRVALARCLVREQPILLLDEPFSALDPALRQEMLTLVSSSCQQQKMTLLMVSHSVEDAARIATRSVVVADGRIAWQGKTDELLSGKASASALLGIKG.

Residues 2-230 (LKLTDITWLY…KASASALLGI (229 aa)) enclose the ABC transporter domain. Position 32-39 (32-39 (GPSGAGKS)) interacts with ATP.

Belongs to the ABC transporter superfamily. Thiamine importer (TC 3.A.1.19.1) family. In terms of assembly, the complex is composed of two ATP-binding proteins (ThiQ), two transmembrane proteins (ThiP) and a solute-binding protein (ThiB).

It is found in the cell inner membrane. It catalyses the reaction thiamine(out) + ATP + H2O = thiamine(in) + ADP + phosphate + H(+). Its function is as follows. Part of the ABC transporter complex ThiBPQ involved in thiamine import. Responsible for energy coupling to the transport system. The protein is Thiamine import ATP-binding protein ThiQ of Escherichia coli (strain UTI89 / UPEC).